A 902-amino-acid chain; its full sequence is Protein translocase subunit SecA (902 aa).

Residues glutamine 85, 103 to 107 (GEGKT), and aspartate 492 each bind ATP. A disordered region spans residues 846–902 (LSYSGGGEEPNQRPKSPRRRSERKIGPNEPCPCGSGKKFKKCHGRVGAPPLPTSQSQ). The Zn(2+) site is built by cysteine 876, cysteine 878, cysteine 887, and histidine 888.

Belongs to the SecA family. Monomer and homodimer. Part of the essential Sec protein translocation apparatus which comprises SecA, SecYEG and auxiliary proteins SecDF. Other proteins may also be involved. Zn(2+) serves as cofactor.

It is found in the cell membrane. The protein resides in the cytoplasm. The catalysed reaction is ATP + H2O + cellular proteinSide 1 = ADP + phosphate + cellular proteinSide 2.. Its function is as follows. Part of the Sec protein translocase complex. Interacts with the SecYEG preprotein conducting channel. Has a central role in coupling the hydrolysis of ATP to the transfer of proteins into and across the cell membrane, serving as an ATP-driven molecular motor driving the stepwise translocation of polypeptide chains across the membrane. The chain is Protein translocase subunit SecA from Rubrobacter xylanophilus (strain DSM 9941 / JCM 11954 / NBRC 16129 / PRD-1).